The sequence spans 215 residues: MIKSTVVYRDDGLPLCSSVDDDISDLSLNEQKKRIKMVVSRMTPQSANEATLESKDSEIHYIRQQGVIYFVICEAGYPRNLAFSYLNDVAVEFQHSYSNELSKPTIRPYAFASFDTFLQRTKKAYSDKKVQDNLDQLNQELVGVKQIMSKNIEDLLYRGDSLEKMDDMSNSLKISSKKYRKSAQKINFDLLISQYAPIVMVAFFFVFLFWWVFLR.

At 1–193 (MIKSTVVYRD…QKINFDLLIS (193 aa)) the chain is on the cytoplasmic side. Residues 6–118 (VVYRDDGLPL…YAFASFDTFL (113 aa)) enclose the Longin domain. The 61-residue stretch at 133 to 193 (NLDQLNQELV…QKINFDLLIS (61 aa)) folds into the v-SNARE coiled-coil homology domain. The chain crosses the membrane as a helical; Anchor for type IV membrane protein span at residues 194–214 (QYAPIVMVAFFFVFLFWWVFL). Residue Arg215 is a topological domain, vesicular.

The protein belongs to the synaptobrevin family.

It is found in the membrane. It localises to the endoplasmic reticulum membrane. The protein localises to the golgi apparatus membrane. Its function is as follows. Required for transport from the ER to the Golgi complex. The chain is Protein transport protein SEC22 (SEC22) from Candida glabrata (strain ATCC 2001 / BCRC 20586 / JCM 3761 / NBRC 0622 / NRRL Y-65 / CBS 138) (Yeast).